The sequence spans 217 residues: Small ribosomal subunit protein uS3c (217 aa).

The 73-residue stretch at 47–119 (VRTHIKSSSN…KLHIAIEKVA (73 aa)) folds into the KH type-2 domain.

Belongs to the universal ribosomal protein uS3 family. As to quaternary structure, part of the 30S ribosomal subunit.

It localises to the plastid. The protein resides in the chloroplast. The polypeptide is Small ribosomal subunit protein uS3c (rps3) (Pinus thunbergii (Japanese black pine)).